Here is a 447-residue protein sequence, read N- to C-terminus: Chromosomal replication initiator protein DnaA (447 aa).

The domain I, interacts with DnaA modulators stretch occupies residues 1–66 (MSNRIISILK…SKAIKEAYGK (66 aa)). Residues 66-102 (KNLDYEIVYETTEPEAFNKSNESYKGPLVKKKPLLIS) are domain II. Residues 103-319 (NLNANYTFEN…GVIIKLIVQS (217 aa)) form a domain III, AAA+ region region. The ATP site is built by Gly-146, Gly-148, Lys-149, and Thr-150. Positions 320-447 (SINKERIGAA…NTMATSSAAG (128 aa)) are domain IV, binds dsDNA.

It belongs to the DnaA family. Oligomerizes as a right-handed, spiral filament on DNA at oriC.

It is found in the cytoplasm. Functionally, plays an essential role in the initiation and regulation of chromosomal replication. ATP-DnaA binds to the origin of replication (oriC) to initiate formation of the DNA replication initiation complex once per cell cycle. Binds the DnaA box (a 9 base pair repeat at the origin) and separates the double-stranded (ds)DNA. Forms a right-handed helical filament on oriC DNA; dsDNA binds to the exterior of the filament while single-stranded (ss)DNA is stabiized in the filament's interior. The ATP-DnaA-oriC complex binds and stabilizes one strand of the AT-rich DNA unwinding element (DUE), permitting loading of DNA polymerase. After initiation quickly degrades to an ADP-DnaA complex that is not apt for DNA replication. Binds acidic phospholipids. The sequence is that of Chromosomal replication initiator protein DnaA from Kosmotoga olearia (strain ATCC BAA-1733 / DSM 21960 / TBF 19.5.1).